A 345-amino-acid chain; its full sequence is Holliday junction branch migration complex subunit RuvB (345 aa).

The interval 4-194 (TDKLFGAAPE…FGIVARLEFY (191 aa)) is large ATPase domain (RuvB-L). ATP-binding positions include Leu-33, Arg-34, Gly-75, Lys-78, Thr-79, Thr-80, 141 to 143 (EDY), Arg-184, Tyr-194, and Arg-231. Residue Thr-79 participates in Mg(2+) binding. A small ATPAse domain (RuvB-S) region spans residues 195–265 (NAEELTRIVS…VADAALAMLD (71 aa)). The tract at residues 268-345 (PAGLDVMDRK…LHFGLPVKDA (78 aa)) is head domain (RuvB-H). Positions 323 and 328 each coordinate DNA.

Belongs to the RuvB family. Homohexamer. Forms an RuvA(8)-RuvB(12)-Holliday junction (HJ) complex. HJ DNA is sandwiched between 2 RuvA tetramers; dsDNA enters through RuvA and exits via RuvB. An RuvB hexamer assembles on each DNA strand where it exits the tetramer. Each RuvB hexamer is contacted by two RuvA subunits (via domain III) on 2 adjacent RuvB subunits; this complex drives branch migration. In the full resolvosome a probable DNA-RuvA(4)-RuvB(12)-RuvC(2) complex forms which resolves the HJ.

Its subcellular location is the cytoplasm. The catalysed reaction is ATP + H2O = ADP + phosphate + H(+). Its function is as follows. The RuvA-RuvB-RuvC complex processes Holliday junction (HJ) DNA during genetic recombination and DNA repair, while the RuvA-RuvB complex plays an important role in the rescue of blocked DNA replication forks via replication fork reversal (RFR). RuvA specifically binds to HJ cruciform DNA, conferring on it an open structure. The RuvB hexamer acts as an ATP-dependent pump, pulling dsDNA into and through the RuvAB complex. RuvB forms 2 homohexamers on either side of HJ DNA bound by 1 or 2 RuvA tetramers; 4 subunits per hexamer contact DNA at a time. Coordinated motions by a converter formed by DNA-disengaged RuvB subunits stimulates ATP hydrolysis and nucleotide exchange. Immobilization of the converter enables RuvB to convert the ATP-contained energy into a lever motion, pulling 2 nucleotides of DNA out of the RuvA tetramer per ATP hydrolyzed, thus driving DNA branch migration. The RuvB motors rotate together with the DNA substrate, which together with the progressing nucleotide cycle form the mechanistic basis for DNA recombination by continuous HJ branch migration. Branch migration allows RuvC to scan DNA until it finds its consensus sequence, where it cleaves and resolves cruciform DNA. The sequence is that of Holliday junction branch migration complex subunit RuvB from Chromobacterium violaceum (strain ATCC 12472 / DSM 30191 / JCM 1249 / CCUG 213 / NBRC 12614 / NCIMB 9131 / NCTC 9757 / MK).